A 270-amino-acid chain; its full sequence is Putative phosphoenolpyruvate synthase regulatory protein (270 aa).

150-157 (GVSRCGKT) lines the ADP pocket.

It belongs to the pyruvate, phosphate/water dikinase regulatory protein family. PSRP subfamily.

The catalysed reaction is [pyruvate, water dikinase] + ADP = [pyruvate, water dikinase]-phosphate + AMP + H(+). The enzyme catalyses [pyruvate, water dikinase]-phosphate + phosphate + H(+) = [pyruvate, water dikinase] + diphosphate. Functionally, bifunctional serine/threonine kinase and phosphorylase involved in the regulation of the phosphoenolpyruvate synthase (PEPS) by catalyzing its phosphorylation/dephosphorylation. The polypeptide is Putative phosphoenolpyruvate synthase regulatory protein (Shewanella pealeana (strain ATCC 700345 / ANG-SQ1)).